The sequence spans 195 residues: Imidazoleglycerol-phosphate dehydratase (195 aa).

It belongs to the imidazoleglycerol-phosphate dehydratase family.

The protein localises to the cytoplasm. The catalysed reaction is D-erythro-1-(imidazol-4-yl)glycerol 3-phosphate = 3-(imidazol-4-yl)-2-oxopropyl phosphate + H2O. Its pathway is amino-acid biosynthesis; L-histidine biosynthesis; L-histidine from 5-phospho-alpha-D-ribose 1-diphosphate: step 6/9. The protein is Imidazoleglycerol-phosphate dehydratase of Burkholderia multivorans (strain ATCC 17616 / 249).